The sequence spans 506 residues: UPF0371 protein FN1121 (506 aa).

Belongs to the UPF0371 family.

The protein is UPF0371 protein FN1121 of Fusobacterium nucleatum subsp. nucleatum (strain ATCC 25586 / DSM 15643 / BCRC 10681 / CIP 101130 / JCM 8532 / KCTC 2640 / LMG 13131 / VPI 4355).